Consider the following 104-residue polypeptide: Signal recognition particle 19 kDa protein (104 aa).

It belongs to the SRP19 family. In terms of assembly, part of the signal recognition particle protein translocation system, which is composed of SRP and FtsY. Archaeal SRP consists of a 7S RNA molecule of 300 nucleotides and two protein subunits: SRP54 and SRP19.

It is found in the cytoplasm. Functionally, involved in targeting and insertion of nascent membrane proteins into the cytoplasmic membrane. Binds directly to 7S RNA and mediates binding of the 54 kDa subunit of the SRP. The sequence is that of Signal recognition particle 19 kDa protein from Archaeoglobus fulgidus (strain ATCC 49558 / DSM 4304 / JCM 9628 / NBRC 100126 / VC-16).